Reading from the N-terminus, the 409-residue chain is DNA replication and repair protein RecF (409 aa).

30–37 serves as a coordination point for ATP; the sequence is GSNGHGKT.

Belongs to the RecF family.

The protein resides in the cytoplasm. Its function is as follows. The RecF protein is involved in DNA metabolism; it is required for DNA replication and normal SOS inducibility. RecF binds preferentially to single-stranded, linear DNA. It also seems to bind ATP. This chain is DNA replication and repair protein RecF, found in Rhodococcus erythropolis (strain PR4 / NBRC 100887).